The chain runs to 443 residues: MSEMTPREIVSELDKHIIGQDNAKRSVAIALRNRWRRMQLNEELRHEVTPKNILMIGPTGVGKTEIARRLAKLANAPLIKVEATKFTEVGYVGKEVDSIIRDLTDAAVKMVRVQAIEKNRYRAEELAEERILDVLIPPAKNNWGQTEQQQEPSAARQAFRKKLREGQLDDKEIEIDLAAAPMGVEIMAPPGMEEMTSQLQSMFQNLGGQKQKARKLKIKDAMKLLIEEEAAKLVNPEELKQDAIDAVEQHGIVFIDEIDKICKRGESSGPDVSREGVQRDLLPLVEGCTVSTKHGMVKTDHILFIASGAFQIAKPSDLIPELQGRLPIRVELQALTTSDFERILTEPNASITVQYKALMATEGVNIEFTDSGIKRIAEAAWQVNESTENIGARRLHTVLERLMEEISYDASDLSGQNITIDADYVSKHLDALVADEDLSRFIL.

ATP is bound by residues Ile-18, 60 to 65, Asp-256, Glu-321, and Arg-393; that span reads GVGKTE.

Belongs to the ClpX chaperone family. HslU subfamily. As to quaternary structure, a double ring-shaped homohexamer of HslV is capped on each side by a ring-shaped HslU homohexamer. The assembly of the HslU/HslV complex is dependent on binding of ATP.

It localises to the cytoplasm. In terms of biological role, ATPase subunit of a proteasome-like degradation complex; this subunit has chaperone activity. The binding of ATP and its subsequent hydrolysis by HslU are essential for unfolding of protein substrates subsequently hydrolyzed by HslV. HslU recognizes the N-terminal part of its protein substrates and unfolds these before they are guided to HslV for hydrolysis. This Shigella dysenteriae serotype 1 (strain Sd197) protein is ATP-dependent protease ATPase subunit HslU.